A 534-amino-acid polypeptide reads, in one-letter code: CTP synthase (534 aa).

The interval 1 to 267 (MTKYIFVTGG…DQIVCDHLKL (267 aa)) is amidoligase domain. Residue Ser-13 participates in CTP binding. Ser-13 serves as a coordination point for UTP. ATP is bound at residue 14 to 19 (SIGKGI). Tyr-54 provides a ligand contact to L-glutamine. Asp-71 is a binding site for ATP. Positions 71 and 141 each coordinate Mg(2+). CTP contacts are provided by residues 148-150 (DIE), 188-193 (KTKPTQ), and Lys-224. UTP is bound by residues 188 to 193 (KTKPTQ) and Lys-224. 240–242 (RDV) lines the ATP pocket. Residues 292 to 534 (KIALVGKYVE…FVTAAIKNSN (243 aa)) enclose the Glutamine amidotransferase type-1 domain. Gly-354 serves as a coordination point for L-glutamine. The active-site Nucleophile; for glutamine hydrolysis is the Cys-381. L-glutamine contacts are provided by residues 382–385 (LGMQ), Glu-405, and Arg-463. Residues His-508 and Glu-510 contribute to the active site.

This sequence belongs to the CTP synthase family. As to quaternary structure, homotetramer.

It catalyses the reaction UTP + L-glutamine + ATP + H2O = CTP + L-glutamate + ADP + phosphate + 2 H(+). The catalysed reaction is L-glutamine + H2O = L-glutamate + NH4(+). The enzyme catalyses UTP + NH4(+) + ATP = CTP + ADP + phosphate + 2 H(+). It functions in the pathway pyrimidine metabolism; CTP biosynthesis via de novo pathway; CTP from UDP: step 2/2. With respect to regulation, allosterically activated by GTP, when glutamine is the substrate; GTP has no effect on the reaction when ammonia is the substrate. The allosteric effector GTP functions by stabilizing the protein conformation that binds the tetrahedral intermediate(s) formed during glutamine hydrolysis. Inhibited by the product CTP, via allosteric rather than competitive inhibition. Catalyzes the ATP-dependent amination of UTP to CTP with either L-glutamine or ammonia as the source of nitrogen. Regulates intracellular CTP levels through interactions with the four ribonucleotide triphosphates. This Streptococcus pyogenes serotype M18 (strain MGAS8232) protein is CTP synthase.